The primary structure comprises 396 residues: L-lactate dehydrogenase (396 aa).

One can recognise an FMN hydroxy acid dehydrogenase domain in the interval 1-380; the sequence is MIISAASDYR…TQDSLVQVLG (380 aa). Tyr24 contributes to the substrate binding site. Positions 106 and 127 each coordinate FMN. Tyr129 contacts substrate. Position 155 (Thr155) interacts with FMN. Arg164 is a substrate binding site. Lys251 provides a ligand contact to FMN. The active-site Proton acceptor is His275. Residue Arg278 participates in substrate binding. 306–330 contributes to the FMN binding site; the sequence is DSGIRNGLDVVRMIALGADTVLLGR.

Belongs to the FMN-dependent alpha-hydroxy acid dehydrogenase family. It depends on FMN as a cofactor.

Its subcellular location is the cell inner membrane. The enzyme catalyses (S)-lactate + A = pyruvate + AH2. Functionally, catalyzes the conversion of L-lactate to pyruvate. Is coupled to the respiratory chain. The sequence is that of L-lactate dehydrogenase from Escherichia coli O1:K1 / APEC.